The chain runs to 150 residues: D-aminoacyl-tRNA deacylase (150 aa).

A Gly-cisPro motif, important for rejection of L-amino acids motif is present at residues 136-137 (GP).

It belongs to the DTD family. In terms of assembly, homodimer.

The protein resides in the cytoplasm. It catalyses the reaction glycyl-tRNA(Ala) + H2O = tRNA(Ala) + glycine + H(+). It carries out the reaction a D-aminoacyl-tRNA + H2O = a tRNA + a D-alpha-amino acid + H(+). An aminoacyl-tRNA editing enzyme that deacylates mischarged D-aminoacyl-tRNAs. Also deacylates mischarged glycyl-tRNA(Ala), protecting cells against glycine mischarging by AlaRS. Acts via tRNA-based rather than protein-based catalysis; rejects L-amino acids rather than detecting D-amino acids in the active site. By recycling D-aminoacyl-tRNA to D-amino acids and free tRNA molecules, this enzyme counteracts the toxicity associated with the formation of D-aminoacyl-tRNA entities in vivo and helps enforce protein L-homochirality. The sequence is that of D-aminoacyl-tRNA deacylase from Staphylococcus haemolyticus (strain JCSC1435).